Consider the following 115-residue polypeptide: U3-lycotoxin-Ls1v (115 aa).

Positions 1 to 20 are cleaved as a signal peptide; that stretch reads MKFVLLFGVLLVTLFSHSSA. Positions 21 to 44 are excised as a propeptide; that stretch reads EMLDDFDQADEDELLSLIEKEEAR. 4 disulfide bridges follow: cysteine 48/cysteine 63, cysteine 55/cysteine 72, cysteine 62/cysteine 87, and cysteine 74/cysteine 85.

Belongs to the neurotoxin 19 (CSTX) family. 01 subfamily. Expressed by the venom gland.

It localises to the secreted. This is U3-lycotoxin-Ls1v from Lycosa singoriensis (Wolf spider).